The chain runs to 146 residues: MSTTADFQQMLRXADLRVTRPRVAVLHAVHXXTRDADTETIIRSVREDLPEVSHQAVYDSLHALTAAALVRRIQPSGSVVSRYESRIGDNHHHVVCRSCGAIADVDCSXAGSAPCLTASEDHGFEIDEAEVIYWGTCPECSVAPSR.

Zn(2+)-binding residues include Cys96 and Cys99.

It belongs to the Fur family.

The protein localises to the cytoplasm. Its function is as follows. Acts as a global negative controlling element, employing Fe(2+) as a cofactor to bind the operator of the repressed genes. The protein is Ferric uptake regulation protein 2 (fur2) of Mycolicibacterium fortuitum (Mycobacterium fortuitum).